Reading from the N-terminus, the 617-residue chain is Kelch-like protein diablo (617 aa).

The interval 1–55 (MGDPLLPGSTGLGSGGTAAATGGTGTTGTGLGSGGTSGTERPPSPARLTHTSEKH) is disordered. Residues 10-37 (TGLGSGGTAAATGGTGTTGTGLGSGGTS) show a composition bias toward gly residues. One can recognise a BTB domain in the interval 73–140 (CDVVLNVGGR…CYTAHIIVEE (68 aa)). The 103-residue stretch at 175-277 (CLGIRAFADT…SPKFLVGTVG (103 aa)) folds into the BACK domain. 6 Kelch repeats span residues 324-370 (VLFA…VLND), 372-418 (LYAV…VLDG), 419-465 (FLYA…VLSG), 467-512 (LYAI…VFNN), 514-559 (IYAV…VVNG), and 560-606 (QLYA…VMRA).

It functions in the pathway protein modification; protein ubiquitination. Functionally, probable substrate-specific adapter of an E3 ubiquitin-protein ligase complex which mediates the ubiquitination and subsequent proteasomal degradation of target proteins. May have a role in synapse differentiation and growth. The chain is Kelch-like protein diablo from Drosophila mojavensis (Fruit fly).